Reading from the N-terminus, the 254-residue chain is Phosphoribosylaminoimidazole-succinocarboxamide synthase (254 aa).

The protein belongs to the SAICAR synthetase family.

The catalysed reaction is 5-amino-1-(5-phospho-D-ribosyl)imidazole-4-carboxylate + L-aspartate + ATP = (2S)-2-[5-amino-1-(5-phospho-beta-D-ribosyl)imidazole-4-carboxamido]succinate + ADP + phosphate + 2 H(+). The protein operates within purine metabolism; IMP biosynthesis via de novo pathway; 5-amino-1-(5-phospho-D-ribosyl)imidazole-4-carboxamide from 5-amino-1-(5-phospho-D-ribosyl)imidazole-4-carboxylate: step 1/2. This chain is Phosphoribosylaminoimidazole-succinocarboxamide synthase, found in Gluconobacter oxydans (strain 621H) (Gluconobacter suboxydans).